The primary structure comprises 153 residues: Pheromone-binding protein Gp-9 (153 aa).

The first 19 residues, 1 to 19 (MKTFVLHIFIFALVAFASA), serve as a signal peptide directing secretion. 3 disulfides stabilise this stretch: cysteine 37–cysteine 77, cysteine 73–cysteine 129, and cysteine 118–cysteine 138.

It belongs to the PBP/GOBP family. In terms of assembly, homodimer.

Its subcellular location is the secreted. Colony queen number, a major feature of social organization, is associated with worker genotype for Gp-9. Colonies are headed by either a single reproductive queen (monogyne form) or multiple queens (polygyne form). Differences in worker Gp-9 genotypes between social forms may cause differences in workers' abilities to recognize queens and regulate their numbers. The polypeptide is Pheromone-binding protein Gp-9 (Solenopsis saevissima (Fire ant)).